Consider the following 492-residue polypeptide: Aerolysin (492 aa).

The first 21 residues, 1 to 21, serve as a signal peptide directing secretion; sequence MKALKITGLSLIISATLAAQT. 2 cysteine pairs are disulfide-bonded: Cys42–Cys98 and Cys182–Cys187. Positions 68-84 are interaction with host N-linked glycan; the sequence is WQISGLANNWVILGPGY. The segment at 256–288 is part of the transmembrane beta-barrel after proteolytic activation of the toxin and insertion into the host membrane; sequence YGLSEKVSTKNKFKWPLVGETEVSIEIAANQSW. Residues 346–355 are interaction with glycans from host GPI-anchor; the sequence is RWGGNAWHTH. The propeptide occupies 446–492; sequence GSDSKVRRTRSVDGANTGLKLDIPLDAQELAELGFENVTLSVTPARN.

This sequence belongs to the aerolysin family. As to quaternary structure, homodimer in solution; homoheptamer in the host membrane. After binding to GPI-anchored proteins in target membranes and proteolytic removal of the C-terminal propeptide, the protein assembles into a heptameric pre-pore complex. A further conformation change leads to insertion into the host membrane. Proteolytic cleavage and subsequent release of the propeptide trigger a major conformation change, leading to the formation of a heptameric pre-pore that then inserts into the host membrane.

It localises to the secreted. The protein resides in the host cell membrane. Secreted, cytolytic toxin that forms pores in host membranes after proteolytic removal of a C-terminal propeptide, leading to destruction of the membrane permeability barrier and cell death. The pores are formed by transmembrane beta-strands and are approximately 3 nm in diameter. This is Aerolysin (aerA) from Aeromonas enteropelogenes (Aeromonas trota).